Here is a 283-residue protein sequence, read N- to C-terminus: Phosphatidylglycerol--prolipoprotein diacylglyceryl transferase (283 aa).

The next 4 membrane-spanning stretches (helical) occupy residues 17 to 37 (LAVR…TFLG), 56 to 76 (FLTW…VLFY), 92 to 112 (WEGG…IWLF), and 117 to 137 (GIGF…GLAS). A 1,2-diacyl-sn-glycero-3-phospho-(1'-sn-glycerol) is bound at residue arginine 139. 3 consecutive transmembrane segments (helical) span residues 194–214 (PSQL…VWLF), 222–242 (GQVA…AEFA), and 255–275 (GLSM…VGFV).

It belongs to the Lgt family.

It localises to the cell inner membrane. It catalyses the reaction L-cysteinyl-[prolipoprotein] + a 1,2-diacyl-sn-glycero-3-phospho-(1'-sn-glycerol) = an S-1,2-diacyl-sn-glyceryl-L-cysteinyl-[prolipoprotein] + sn-glycerol 1-phosphate + H(+). It participates in protein modification; lipoprotein biosynthesis (diacylglyceryl transfer). Functionally, catalyzes the transfer of the diacylglyceryl group from phosphatidylglycerol to the sulfhydryl group of the N-terminal cysteine of a prolipoprotein, the first step in the formation of mature lipoproteins. This is Phosphatidylglycerol--prolipoprotein diacylglyceryl transferase from Neisseria meningitidis serogroup C (strain 053442).